The sequence spans 381 residues: 5-amino-6-(D-ribitylamino)uracil--L-tyrosine 4-hydroxyphenyl transferase (381 aa).

In terms of domain architecture, Radical SAM core spans 59–306 (VTYVVNRNIN…TAVARIFLGN (248 aa)). [4Fe-4S] cluster contacts are provided by Cys73, Cys77, and Cys80.

Belongs to the radical SAM superfamily. CofH family. In terms of assembly, consists of two subunits, CofG and CofH. Requires [4Fe-4S] cluster as cofactor.

The enzyme catalyses 5-amino-6-(D-ribitylamino)uracil + L-tyrosine + S-adenosyl-L-methionine = 5-amino-5-(4-hydroxybenzyl)-6-(D-ribitylimino)-5,6-dihydrouracil + 2-iminoacetate + 5'-deoxyadenosine + L-methionine + H(+). It functions in the pathway cofactor biosynthesis; coenzyme F0 biosynthesis. Its function is as follows. Catalyzes the radical-mediated synthesis of 5-amino-5-(4-hydroxybenzyl)-6-(D-ribitylimino)-5,6-dihydrouracil from 5-amino-6-(D-ribitylamino)uracil and L-tyrosine. This Cyanothece sp. (strain PCC 7425 / ATCC 29141) protein is 5-amino-6-(D-ribitylamino)uracil--L-tyrosine 4-hydroxyphenyl transferase.